The primary structure comprises 178 residues: Interleukin-10 (178 aa).

A signal peptide spans 1 to 18 (MPNPVLLYCLVLLAGMGT). 2 disulfides stabilise this stretch: cysteine 30–cysteine 126 and cysteine 80–cysteine 132. The N-linked (GlcNAc...) asparagine glycan is linked to asparagine 134.

The protein belongs to the IL-10 family. As to quaternary structure, homodimer. Interacts with IL10RA and IL10RB.

It is found in the secreted. Major immune regulatory cytokine that acts on many cells of the immune system where it has profound anti-inflammatory functions, limiting excessive tissue disruption caused by inflammation. Mechanistically, IL10 binds to its heterotetrameric receptor comprising IL10RA and IL10RB leading to JAK1 and STAT2-mediated phosphorylation of STAT3. In turn, STAT3 translocates to the nucleus where it drives expression of anti-inflammatory mediators. Targets antigen-presenting cells (APCs) such as macrophages and monocytes and inhibits their release of pro-inflammatory cytokines including granulocyte-macrophage colony-stimulating factor /GM-CSF, granulocyte colony-stimulating factor/G-CSF, IL-1 alpha, IL-1 beta, IL-6, IL-8 and TNF-alpha. Also interferes with antigen presentation by reducing the expression of MHC-class II and co-stimulatory molecules, thereby inhibiting their ability to induce T cell activation. In addition, controls the inflammatory response of macrophages by reprogramming essential metabolic pathways including mTOR signaling. This Marmota monax (Woodchuck) protein is Interleukin-10 (IL10).